Consider the following 277-residue polypeptide: MSTSEIISRVWGGVLYMQFHLDRALSNQECPSFYVAVHRNSYLHNSLPAILQFFKPFLKDARLAQSQKWWFEFEKVPLKWNFPVGLLYDLVTTDAQVEKQMWEITLKYYDYPIEYVIPIDQNPSFLKDHWTNQLKEACFILNGSSKLVMNMSRTDSDDFYHAAIHKDSTQFESMFRKLLPSSVSSLKNLPIKVYLPLSNKLIQPVLSNLGRKITLGNLLQDLIPDLFPSSLMYTVAHPYSHGVVLPLDSSIIDLYICMKSLDGFLHISIKMIQKNEH.

Residue Lys-135 forms a Glycyl lysine isopeptide (Lys-Gly) (interchain with G-Cter in ATG12) linkage.

Belongs to the ATG5 family. In terms of assembly, conjugated with ATG12. In terms of processing, conjugated to ATG12; which is essential for autophagy.

The protein localises to the preautophagosomal structure membrane. Involved in cytoplasm to vacuole transport (Cvt) and autophagic vesicle formation. Autophagy is essential for maintenance of amino acid levels and protein synthesis under nitrogen starvation. Required for selective autophagic degradation of the nucleus (nucleophagy). Also required for mitophagy, which eliminates defective or superfluous mitochondria in order to fulfill cellular energy requirements and prevent excess ROS production. Conjugation with ATG12, through a ubiquitin-like conjugating system involving ATG7 as an E1-like activating enzyme and ATG10 as an E2-like conjugating enzyme, is essential for its function. The ATG12-ATG5 conjugate acts as an E3-like enzyme which is required for lipidation of ATG8 and ATG8 association to the vesicle membranes. In Pichia angusta (Yeast), this protein is Autophagy protein 5 (ATG5).